The chain runs to 213 residues: Protein brother (213 aa).

Positions 189–213 (HTPQTPPEDHHHRGGPGLPRGPMGW) are disordered. The segment covering 203–213 (GPGLPRGPMGW) has biased composition (gly residues).

The protein belongs to the CBF-beta family.

Its subcellular location is the nucleus. Regulates the DNA-binding properties of Runt. The polypeptide is Protein brother (Bro) (Drosophila melanogaster (Fruit fly)).